A 201-amino-acid polypeptide reads, in one-letter code: Recombination protein RecR (201 aa).

A C4-type zinc finger spans residues 57-72 (CCDCRTFTEEERCTIC). The Toprim domain occupies 81 to 176 (GQICVVESPA…AASRIAHGVP (96 aa)).

It belongs to the RecR family.

Its function is as follows. May play a role in DNA repair. It seems to be involved in an RecBC-independent recombinational process of DNA repair. It may act with RecF and RecO. In Proteus mirabilis (strain HI4320), this protein is Recombination protein RecR.